Reading from the N-terminus, the 182-residue chain is DOMON domain-containing protein Y73F4A.1 (182 aa).

An N-terminal signal peptide occupies residues 1-18 (MFVLAIVFAFVFIPSSSS). Residues 26 to 143 (ELVSMNWNVK…CLNWMVVPGG (118 aa)) enclose the DOMON domain. 2 N-linked (GlcNAc...) asparagine glycosylation sites follow: Asn47 and Asn128.

The protein resides in the secreted. In Caenorhabditis elegans, this protein is DOMON domain-containing protein Y73F4A.1.